Reading from the N-terminus, the 835-residue chain is Pre-mRNA-processing protein 40C (835 aa).

Residues Met1–Ser20 are compositionally biased toward polar residues. Positions Met1–Phe22 are disordered. WW domains follow at residues Gly243–Gly276 and Ser295–Glu328. Positions Ser397–Ser459 are disordered. Polar residues predominate over residues Pro400–Gly428. 3 FF domains span residues Lys455–Thr509, Arg519–Ser577, and Arg590–Glu643. Disordered stretches follow at residues Arg649–Arg677 and Thr714–Lys738. 2 consecutive FF domains span residues Arg691 to Ser748 and Tyr750 to Asp815.

The protein belongs to the PRPF40 family. In terms of assembly, interacts (via the WW domains) with the phosphorylated C-terminal domain of NRPB1 (via CTD domain). In terms of tissue distribution, expressed in roots, shoots, rosette leaves, cauline leaves, stems and flowers.

The protein resides in the nucleus. Functionally, binds the phosphorylated C-terminal domain (CTD) of the largest subunit of RNA polymerase II and functions as a scaffold for RNA processing machineries. May be involved in pre-mRNA splicing. The sequence is that of Pre-mRNA-processing protein 40C from Arabidopsis thaliana (Mouse-ear cress).